The following is a 140-amino-acid chain: Mediator of RNA polymerase II transcription subunit 21 (140 aa).

Residues 52 to 130 (EERERTLEEL…CDELILKLAQ (79 aa)) are a coiled coil.

It belongs to the Mediator complex subunit 21 family. In terms of assembly, component of the Mediator complex.

Its subcellular location is the nucleus. Its function is as follows. Component of the Mediator complex, a coactivator involved in the regulated transcription of nearly all RNA polymerase II-dependent genes. Mediator functions as a bridge to convey information from gene-specific regulatory proteins to the basal RNA polymerase II transcription machinery. Mediator is recruited to promoters by direct interactions with regulatory proteins and serves as a scaffold for the assembly of a functional preinitiation complex with RNA polymerase II and the general transcription factors. The sequence is that of Mediator of RNA polymerase II transcription subunit 21 (SRB7) from Yarrowia lipolytica (strain CLIB 122 / E 150) (Yeast).